We begin with the raw amino-acid sequence, 203 residues long: Small ribosomal subunit protein uS7B (203 aa).

It belongs to the universal ribosomal protein uS7 family. Component of the small ribosomal subunit (SSU). Mature yeast ribosomes consist of a small (40S) and a large (60S) subunit. The 40S small subunit contains 1 molecule of ribosomal RNA (18S rRNA) and at least 33 different proteins. The large 60S subunit contains 3 rRNA molecules (25S, 5.8S and 5S rRNA) and at least 46 different proteins.

It localises to the cytoplasm. Its function is as follows. Component of the ribosome, a large ribonucleoprotein complex responsible for the synthesis of proteins in the cell. The small ribosomal subunit (SSU) binds messenger RNAs (mRNAs) and translates the encoded message by selecting cognate aminoacyl-transfer RNA (tRNA) molecules. The large subunit (LSU) contains the ribosomal catalytic site termed the peptidyl transferase center (PTC), which catalyzes the formation of peptide bonds, thereby polymerizing the amino acids delivered by tRNAs into a polypeptide chain. The nascent polypeptides leave the ribosome through a tunnel in the LSU and interact with protein factors that function in enzymatic processing, targeting, and the membrane insertion of nascent chains at the exit of the ribosomal tunnel. This is Small ribosomal subunit protein uS7B (rps502) from Schizosaccharomyces pombe (strain 972 / ATCC 24843) (Fission yeast).